Reading from the N-terminus, the 507-residue chain is MQVSVAEISGILKKQIAEYGKEAEVSEVGEVIAVGDGIARAYGLDNVMAGEMVEFEDGTQGMALNLEEDNVGIVIFGEGLAIKEGTTVKRTGRIVDVPVGKGLLGRVTDGLGNPIDDKGPLETTERRLAEVKAPGIIPRKSVHEPLHTGIKALDGLVPIGRGQRELIIGDRQTGKTAVAIDTIINQKRTHETDSPVYCIYVAIGQKRSTVAQVVQTLEENGAMAYTTVVAATASDPAPMQFLSAYTGCAMGEYYRDNGMHALIVYDDLSKQATAYRQMSLILRRPPGREAYPGDVFYIHSRLLERAAKMNDEHGGGSLTALPIIETQDGDVSAYIPTNVISITDGQIFLETDLFYSGIRPAISVGLSVSRVGGSAQVKATKQVAGTLRLDLAQYREMAAFAQFGSDLDATTQKLLHRGKRLMELLKQAQYAPLSMEEQVVSIFAGTRGFLDVVDADAVVKAELELLKQMHAKHSDLLDTIRTSGKLDADTETKLGVAITAIIKEFLA.

169 to 176 contributes to the ATP binding site; it reads GDRQTGKT.

Belongs to the ATPase alpha/beta chains family. As to quaternary structure, F-type ATPases have 2 components, CF(1) - the catalytic core - and CF(0) - the membrane proton channel. CF(1) has five subunits: alpha(3), beta(3), gamma(1), delta(1), epsilon(1). CF(0) has three main subunits: a(1), b(2) and c(9-12). The alpha and beta chains form an alternating ring which encloses part of the gamma chain. CF(1) is attached to CF(0) by a central stalk formed by the gamma and epsilon chains, while a peripheral stalk is formed by the delta and b chains.

The protein localises to the cell inner membrane. It carries out the reaction ATP + H2O + 4 H(+)(in) = ADP + phosphate + 5 H(+)(out). Produces ATP from ADP in the presence of a proton gradient across the membrane. The alpha chain is a regulatory subunit. The chain is ATP synthase subunit alpha from Magnetococcus marinus (strain ATCC BAA-1437 / JCM 17883 / MC-1).